Reading from the N-terminus, the 607-residue chain is Elongation factor 4 (607 aa).

Positions 11-193 (SKIRNFSIIA…QIVEKVPAPA (183 aa)) constitute a tr-type G domain. GTP-binding positions include 23–28 (DHGKST) and 140–143 (NKID).

The protein belongs to the TRAFAC class translation factor GTPase superfamily. Classic translation factor GTPase family. LepA subfamily.

It is found in the cell membrane. The catalysed reaction is GTP + H2O = GDP + phosphate + H(+). Functionally, required for accurate and efficient protein synthesis under certain stress conditions. May act as a fidelity factor of the translation reaction, by catalyzing a one-codon backward translocation of tRNAs on improperly translocated ribosomes. Back-translocation proceeds from a post-translocation (POST) complex to a pre-translocation (PRE) complex, thus giving elongation factor G a second chance to translocate the tRNAs correctly. Binds to ribosomes in a GTP-dependent manner. This is Elongation factor 4 from Bacillus cereus (strain B4264).